We begin with the raw amino-acid sequence, 633 residues long: 1-deoxy-D-xylulose-5-phosphate synthase (633 aa).

Thiamine diphosphate is bound by residues His72 and 113-115; that span reads GHS. Asp144 contacts Mg(2+). Residues 145 to 146, Asn173, Tyr284, and Glu367 contribute to the thiamine diphosphate site; that span reads GA. Residue Asn173 participates in Mg(2+) binding.

It belongs to the transketolase family. DXPS subfamily. As to quaternary structure, homodimer. Mg(2+) is required as a cofactor. The cofactor is thiamine diphosphate.

The catalysed reaction is D-glyceraldehyde 3-phosphate + pyruvate + H(+) = 1-deoxy-D-xylulose 5-phosphate + CO2. It participates in metabolic intermediate biosynthesis; 1-deoxy-D-xylulose 5-phosphate biosynthesis; 1-deoxy-D-xylulose 5-phosphate from D-glyceraldehyde 3-phosphate and pyruvate: step 1/1. Its function is as follows. Catalyzes the acyloin condensation reaction between C atoms 2 and 3 of pyruvate and glyceraldehyde 3-phosphate to yield 1-deoxy-D-xylulose-5-phosphate (DXP). The chain is 1-deoxy-D-xylulose-5-phosphate synthase from Lysinibacillus sphaericus (strain C3-41).